A 2038-amino-acid chain; its full sequence is HEAT repeat-containing protein 5A (2038 aa).

HEAT repeat units follow at residues 850 to 887 (EVRRLVLTLVLGALESPTPLLRCAASEAWARLAQVADD) and 1082 to 1119 (LLRRAVLACLRQLVQREAAEVSEHAIMLARDGRDAAAD). Residues 1646-1668 (RSAEVDDGASEKETLPEFGEGKD) are disordered. The residue at position 1647 (S1647) is a Phosphoserine.

Belongs to the HEATR5 family.

The polypeptide is HEAT repeat-containing protein 5A (Heatr5a) (Mus musculus (Mouse)).